A 356-amino-acid chain; its full sequence is MTKHIAILRGDGIGPEIVAETVRVLDKLIAQGLDAGYEYAPLGGEAYDEYGHPYPEFTQNLCRKADAVLLGAVGSPQYDNLDRPLRPERGLLAIRKDLNLFANLRPAVLYPELANASTLKPEIVAGLDILIVRELTGDIYFGEPRGIRVLENGEREGYNTMKYSESEIRRIAHVAFQSAQKRSKKVCSVGKANVLETTELWREIFEEIGKEYPDVELSHMYVDNAAMQLVRAPKQFDVIATGNIFGDILSDEASMLTGSIGMLPSASLDENGKGLYEPSHGSAPDIAGQNKANPLATILSLAMLLRYSLNDEARAQQVENAVQKVLQQGLRTSDIYEEGTKLVSCSEMGDAVLAAL.

Substrate-binding residues include arginine 95, arginine 105, arginine 133, and aspartate 223. Mg(2+) contacts are provided by aspartate 223, aspartate 247, and aspartate 251. 281-293 provides a ligand contact to NAD(+); it reads GSAPDIAGQNKAN.

The protein belongs to the isocitrate and isopropylmalate dehydrogenases family. LeuB type 1 subfamily. As to quaternary structure, homodimer. Mg(2+) serves as cofactor. It depends on Mn(2+) as a cofactor.

The protein resides in the cytoplasm. It catalyses the reaction (2R,3S)-3-isopropylmalate + NAD(+) = 4-methyl-2-oxopentanoate + CO2 + NADH. The protein operates within amino-acid biosynthesis; L-leucine biosynthesis; L-leucine from 3-methyl-2-oxobutanoate: step 3/4. Catalyzes the oxidation of 3-carboxy-2-hydroxy-4-methylpentanoate (3-isopropylmalate) to 3-carboxy-4-methyl-2-oxopentanoate. The product decarboxylates to 4-methyl-2 oxopentanoate. The sequence is that of 3-isopropylmalate dehydrogenase from Neisseria meningitidis serogroup B (strain ATCC BAA-335 / MC58).